The sequence spans 107 residues: Ferredoxin CarAc (107 aa).

In terms of domain architecture, Rieske spans 6–102 (LKVCAASDMQ…VEVKEGEVYV (97 aa)). Positions 46, 48, 65, and 68 each coordinate [2Fe-2S] cluster.

Monomer. Carbazole 1,9a-dioxygenase complex consists of a terminal oxygenase component CarAa, a ferredoxin reductase component CarAd and a ferredoxin component CarAc. [2Fe-2S] cluster serves as cofactor.

Functionally, part of the multicomponent carbazole 1,9a-dioxygenase (CARDO), that converts carbazole (CAR) into 2-aminobiphenyl-2,3-diol. Acts as a mediator in the electron transfer from CarAd to CarAa. The chain is Ferredoxin CarAc (carAc) from Metapseudomonas resinovorans (Pseudomonas resinovorans).